Reading from the N-terminus, the 476-residue chain is 3-isopropylmalate dehydratase large subunit (476 aa).

The [4Fe-4S] cluster site is built by cysteine 347, cysteine 407, and cysteine 410. The segment at 418-442 (LAPGERSASTSNRNFEGRQGKGGRT) is disordered.

This sequence belongs to the aconitase/IPM isomerase family. LeuC type 1 subfamily. As to quaternary structure, heterodimer of LeuC and LeuD. The cofactor is [4Fe-4S] cluster.

The catalysed reaction is (2R,3S)-3-isopropylmalate = (2S)-2-isopropylmalate. It participates in amino-acid biosynthesis; L-leucine biosynthesis; L-leucine from 3-methyl-2-oxobutanoate: step 2/4. Catalyzes the isomerization between 2-isopropylmalate and 3-isopropylmalate, via the formation of 2-isopropylmaleate. The chain is 3-isopropylmalate dehydratase large subunit from Streptomyces coelicolor (strain ATCC BAA-471 / A3(2) / M145).